The following is a 1209-amino-acid chain: 3',5'-cyclic-AMP phosphodiesterase, isoform I (1209 aa).

Disordered stretches follow at residues asparagine 16–threonine 35, glycine 59–serine 82, leucine 275–proline 353, serine 372–isoleucine 403, glutamate 442–glutamate 498, valine 626–glycine 655, and serine 754–threonine 792. Composition is skewed to gly residues over residues serine 25 to threonine 35 and glycine 59 to serine 77. Residues leucine 275 to valine 290 show a composition bias toward polar residues. The span at glutamine 291–glutamine 314 shows a compositional bias: low complexity. Over residues arginine 315–proline 324 the composition is skewed to polar residues. Low complexity predominate over residues serine 372–proline 383. Polar residues predominate over residues glycine 385–serine 400. Composition is skewed to low complexity over residues alanine 445–serine 462 and threonine 472–histidine 483. Composition is skewed to polar residues over residues proline 484 to glutamate 498 and proline 627 to glycine 645. Residues valine 795–serine 1124 form the PDEase domain. Catalysis depends on histidine 871, which acts as the Proton donor. Histidine 871 to histidine 875 is a binding site for 3',5'-cyclic AMP. Positions 875, 911, 912, and 1029 each coordinate a divalent metal cation. 3',5'-cyclic AMP-binding residues include aspartate 912, aspartate 1029, and glutamine 1080. A compositionally biased stretch (acidic residues) spans glutamate 1146–glycine 1163. A disordered region spans residues glutamate 1146 to methionine 1209. A compositionally biased stretch (low complexity) spans glycine 1164 to serine 1181. Over residues glycine 1182–methionine 1193 the composition is skewed to gly residues. Residues glycine 1199–methionine 1209 are compositionally biased toward polar residues.

The protein belongs to the cyclic nucleotide phosphodiesterase family. PDE4 subfamily. Monomer. A divalent metal cation serves as cofactor.

The catalysed reaction is 3',5'-cyclic AMP + H2O = AMP + H(+). It functions in the pathway purine metabolism; 3',5'-cyclic AMP degradation; AMP from 3',5'-cyclic AMP: step 1/1. Hydrolyzes the second messenger cAMP, which is a key regulator of many important physiological processes. Vital for female fertility. Required for learning/memory. The polypeptide is 3',5'-cyclic-AMP phosphodiesterase, isoform I (Drosophila melanogaster (Fruit fly)).